Reading from the N-terminus, the 67-residue chain is Large ribosomal subunit protein bL35 (67 aa).

Over residues 1-16 (MPKMKTKSSAKKRFRV) the composition is skewed to basic residues. The disordered stretch occupies residues 1-24 (MPKMKTKSSAKKRFRVRPGGTVKR).

Belongs to the bacterial ribosomal protein bL35 family.

In Paracidovorax citrulli (strain AAC00-1) (Acidovorax citrulli), this protein is Large ribosomal subunit protein bL35.